The primary structure comprises 120 residues: Phosphoribosyl-AMP cyclohydrolase (120 aa).

Asp75 is a Mg(2+) binding site. A Zn(2+)-binding site is contributed by Cys76. Positions 77 and 79 each coordinate Mg(2+). Zn(2+)-binding residues include Cys92 and Cys99.

This sequence belongs to the PRA-CH family. As to quaternary structure, homodimer. Mg(2+) serves as cofactor. It depends on Zn(2+) as a cofactor.

The protein resides in the cytoplasm. The catalysed reaction is 1-(5-phospho-beta-D-ribosyl)-5'-AMP + H2O = 1-(5-phospho-beta-D-ribosyl)-5-[(5-phospho-beta-D-ribosylamino)methylideneamino]imidazole-4-carboxamide. It functions in the pathway amino-acid biosynthesis; L-histidine biosynthesis; L-histidine from 5-phospho-alpha-D-ribose 1-diphosphate: step 3/9. Its function is as follows. Catalyzes the hydrolysis of the adenine ring of phosphoribosyl-AMP. In Methanosarcina acetivorans (strain ATCC 35395 / DSM 2834 / JCM 12185 / C2A), this protein is Phosphoribosyl-AMP cyclohydrolase.